A 306-amino-acid chain; its full sequence is Ribonuclease Z (306 aa).

Zn(2+) is bound by residues His63, His65, Asp67, His68, His141, Asp211, and His269. The active-site Proton acceptor is the Asp67.

It belongs to the RNase Z family. Homodimer. It depends on Zn(2+) as a cofactor.

It carries out the reaction Endonucleolytic cleavage of RNA, removing extra 3' nucleotides from tRNA precursor, generating 3' termini of tRNAs. A 3'-hydroxy group is left at the tRNA terminus and a 5'-phosphoryl group is left at the trailer molecule.. In terms of biological role, zinc phosphodiesterase, which displays some tRNA 3'-processing endonuclease activity. Probably involved in tRNA maturation, by removing a 3'-trailer from precursor tRNA. The polypeptide is Ribonuclease Z (Staphylococcus aureus (strain Mu3 / ATCC 700698)).